Here is a 162-residue protein sequence, read N- to C-terminus: Regulator of ribonuclease activity A (162 aa).

Belongs to the RraA family. As to quaternary structure, homotrimer. Binds to both RNA-binding sites in the C-terminal region of Rne and to RhlB.

The protein resides in the cytoplasm. Its function is as follows. Globally modulates RNA abundance by binding to RNase E (Rne) and regulating its endonucleolytic activity. Can modulate Rne action in a substrate-dependent manner by altering the composition of the degradosome. Modulates RNA-binding and helicase activities of the degradosome. This Haemophilus influenzae (strain ATCC 51907 / DSM 11121 / KW20 / Rd) protein is Regulator of ribonuclease activity A.